The following is a 196-amino-acid chain: DNA replication complex GINS protein PSF1 (196 aa).

This sequence belongs to the GINS1/PSF1 family. As to quaternary structure, component of the GINS complex which is a heterotetramer of gins1/psf1, gins2/psf2, gins3/psf3 and gins4/sld5. Component of the CMG helicase complex, composed of the mcm2-7 complex, the GINS complex and cdc45.

The protein resides in the nucleus. The protein localises to the chromosome. Required for correct functioning of the GINS complex, a complex that plays an essential role in the initiation of DNA replication, and progression of DNA replication forks. GINS complex is a core component of CDC45-MCM-GINS (CMG) helicase, the molecular machine that unwinds template DNA during replication, and around which the replisome is built. This is DNA replication complex GINS protein PSF1 from Xenopus laevis (African clawed frog).